We begin with the raw amino-acid sequence, 404 residues long: MRLCLFLCLVLLGPRMATLRRSQKKKIQEVPPAVTTAPPGSRDFVFDLYRALAAAAPAQNIFFSPLSITVSLAMLSLGAQSNTKAQILEGLGIGPGEGSEEELHSASQRLLRELQQPQDSLQLSLGNALFTKPRLPIQEAFLGAMRTLYLADTFPTNFEDPEGAKKKINDYVAKQTKGKIVDLIKSLDGTQVMVMVNYIFFKAKWETSFNLKSTHEQDFYVTPETVVRVPMMKQQDQFYYLLDRNLSCKVVGVPYQGNATAFFILPREGEMEQVENGLKEKTLKKWLRMPMKRRLELYLPKFSIEGSYQLEEVLPKLGIRDIFTSDADLTGISNHSSIRVSEMVHKAVVEVDESGTQAAAATGMVITFKSARLGSQRIVFNRPFLVLIVKNSKHILFLGKVTRP.

An N-terminal signal peptide occupies residues 1–19 (MRLCLFLCLVLLGPRMATL). Residues 20–24 (RRSQK) constitute a propeptide, removed in mature form. 2 O-linked (GalNAc...) threonine glycosylation sites follow: T35 and T36. Residues N245, N258, and N334 are each glycosylated (N-linked (GlcNAc...) asparagine).

Belongs to the serpin family. As to quaternary structure, forms protease inhibiting heterodimers in extracellular body fluids with serine proteases such as activated protein C/coagulation factor V/F5, acrosin/ACR, chymotrypsinogen B/CTRB1, prothrombin/F2, factor Xa/F10, factor XI/F11, kallikrein/KLKB1, tissue kallikrein, trypsin/PRSS1, prostate specific antigen/KLK3, tissue plasminogen activator/PLAT and urinary plasminogen activator/PLAU. Forms membrane-anchored serine proteases inhibiting heterodimers with TMPRSS7 and TMPRSS11E. Interacts with SEMG2. In terms of processing, N-glycosylated; glycans consist of a mixture of sialylated bi- (including sialyl-Lewis X epitopes), tri- and tetra-antennary complex-type chains; affects the maximal heparin- and thrombomodulin-enhanced rates of thrombin inhibition. O-glycosylated; further modified with 2 sialic acid residues. Proteolytically cleaved at the N-terminus; inhibits slightly the heparin- and thrombomodulin-enhanced rates of thrombin inhibition. N- and O-glycosylated. Proteolytically cleaved. Inhibition of proteases is accompanied by formation of a stable enzyme-inhibitor complex and by degradation of the serpin to lower molecular weight derivatives. Expressed strongly in the liver, and moderately in the kidney and testis, but not in other tissues tested.

It localises to the secreted. It is found in the extracellular space. With respect to regulation, its inhibitory activity is greatly enhanced in the presence of glycosaminoglycans, heparin, thrombomodulin and phospholipids vesicles. Its function is as follows. Heparin-dependent serine protease inhibitor acting in body fluids and secretions. Inactivates serine proteases by binding irreversibly to their serine activation site. Involved in the regulation of intravascular and extravascular proteolytic activities. Plays hemostatic roles in the blood plasma. Acts as a procoagulant and pro-inflammatory factor by inhibiting the anticoagulant activated protein C factor as well as the generation of activated protein C factor by the thrombin/thrombomodulin complex. Acts as an anticoagulant factor by inhibiting blood coagulation factors like prothrombin, factor XI, factor Xa, plasma kallikrein and fibrinolytic enzymes such as tissue- and urinary-type plasminogen activators. In seminal plasma, inactivates several serine proteases implicated in the reproductive system. Inhibits the serpin acrosin; indirectly protects component of the male genital tract from being degraded by excessive released acrosin. Inhibits tissue- and urinary-type plasminogen activator, prostate-specific antigen and kallikrein activities; has a control on the sperm motility and fertilization. Inhibits the activated protein C-catalyzed degradation of SEMG1 and SEMG2; regulates the degradation of semenogelin during the process of transfer of spermatozoa from the male reproductive tract into the female tract. In urine, inhibits urinary-type plasminogen activator and kallikrein activities. Inactivates membrane-anchored serine proteases activities such as MPRSS7 and TMPRSS11E. Inhibits urinary-type plasminogen activator-dependent tumor cell invasion and metastasis. May also play a non-inhibitory role in seminal plasma and urine as a hydrophobic hormone carrier by its binding to retinoic acid. This is Plasma serine protease inhibitor (SERPINA5) from Bos taurus (Bovine).